The primary structure comprises 438 residues: Diaminopimelate decarboxylase (438 aa).

An N6-(pyridoxal phosphate)lysine modification is found at Lys-73. Pyridoxal 5'-phosphate-binding positions include Ser-217, Gly-254, and 294–297 (EPGR). Positions 297, 333, and 337 each coordinate substrate. Catalysis depends on Cys-362, which acts as the Proton donor. The substrate site is built by Glu-363 and Tyr-391. Tyr-391 serves as a coordination point for pyridoxal 5'-phosphate.

The protein belongs to the Orn/Lys/Arg decarboxylase class-II family. LysA subfamily. Homodimer. Pyridoxal 5'-phosphate is required as a cofactor.

The catalysed reaction is meso-2,6-diaminopimelate + H(+) = L-lysine + CO2. It functions in the pathway amino-acid biosynthesis; L-lysine biosynthesis via DAP pathway; L-lysine from DL-2,6-diaminopimelate: step 1/1. Its activity is regulated as follows. Competitively inhibited by the substrate analog azelaic acid in vitro but not in vivo. Its function is as follows. Specifically catalyzes the decarboxylation of meso-diaminopimelate (meso-DAP) to L-lysine. This is Diaminopimelate decarboxylase from Methanocaldococcus jannaschii (strain ATCC 43067 / DSM 2661 / JAL-1 / JCM 10045 / NBRC 100440) (Methanococcus jannaschii).